The primary structure comprises 341 residues: MKPFVPKLVYFEPEALSYPLGQELYEKFTQMGIEIRETTSHNQVRGIPGETELARYRNAKSTLVVGVRRTLKFDSSKPSAEYAIPLATGCMGHCHYCYLQTTLGSKPYIRVYVNLDDIFAQAQKYIDERAPEITRFEAACTSDIVGIDHLTHSLKKAIEFIGATDYGRLRFVTKYEHVDHLLDAKHNGKTRFRFSVNSRYVINHFEPGTSSFDARLQAARKVAGAGYKLGFVVAPIYRHDGWEQGYFELFQELARQLEGVDLSDLTFELIQHRFTKPAKRVIEQRYPKTKLDLDESKRKYKWGRYGIGKYVYRDKEARELEETMRSYIARFFPSAQVQYFT.

Residues 76–304 (SKPSAEYAIP…ESKRKYKWGR (229 aa)) enclose the Radical SAM core domain. Positions 90, 94, and 97 each coordinate [4Fe-4S] cluster. A DNA-binding region (H-T-H motif) is located at residues 217-234 (QAARKVAGAGYKLGFVVA).

Belongs to the radical SAM superfamily. SPL family. In terms of assembly, monomer or homodimer. The cofactor is [4Fe-4S] cluster. S-adenosyl-L-methionine is required as a cofactor.

It carries out the reaction (5R)-5,6-dihydro-5-(thymidin-7-yl)thymidine in DNA = a thymidine dimer in DNA. Functionally, involved in repair of UV radiation-induced DNA damage during spore germination. Can repair thymine dimer 5-thyminyl-5,6-dihydrothymine (known as spore photoproduct (SP)) by in situ monomerization of SP to two thymines. In Geobacillus sp. (strain Y412MC61), this protein is Spore photoproduct lyase (splG).